The chain runs to 164 residues: uncharacterized protein (164 aa).

Residues 144–164 (GFISPEKEHESEDMTSQSLVA) are disordered.

This is an uncharacterized protein from Synechocystis sp. (strain ATCC 27184 / PCC 6803 / Kazusa).